The chain runs to 533 residues: Flavin-dependent halogenase armH4 (533 aa).

Residues G16, A19, and E49 each contribute to the FAD site. Chloride is bound by residues S337 and G338. Position 339 (V339) interacts with FAD.

It belongs to the flavin-dependent halogenase family.

The catalysed reaction is melleolide F + FADH2 + chloride + O2 = 6'-chloromelleolide F + FAD + 2 H2O + H(+). It catalyses the reaction melleolide F + bromide + FADH2 + O2 = 6'-bromomelleolide F + FAD + 2 H2O. Its function is as follows. Flavin-dependent halogenase involved in the biosynthesis of melleolides, a range of antifungal and phytotoxic polyketide derivatives composed of an orsellinic acid (OA) moiety esterified to various sesquiterpene alcohols. The halogenase catalyzes the transfer of a single chlorine atom to the melleolide backbone, resulting in a 6'-chloromelleolide product. The enzyme acts on free substrate and does not depend on carrier-protein-dependent acceptor molecules. Can also catalyze the transfer of a single bromine atom to the melleolide backbone in vitro. This is Flavin-dependent halogenase armH4 from Armillaria mellea (Honey mushroom).